The sequence spans 730 residues: Patatin-like phospholipase domain-containing protein CIMG_04897 (730 aa).

Over residues 1–11 the composition is skewed to basic residues; sequence MTANSSRRRLQ. Residues 1–26 form a disordered region; that stretch reads MTANSSRRRLQMKSPRTDGDEKEEDY. The chain crosses the membrane as a helical span at residues 97–117; the sequence is WPFLLFVLSWIVFLGALYILT. A PNPLA domain is found at 281 to 472; sequence LCLSGGATLA…RTDIPLKALD (192 aa). Residues 312–316 carry the GXSXG motif; the sequence is GTSGG. Serine 314 acts as the Nucleophile in catalysis. Catalysis depends on aspartate 459, which acts as the Proton acceptor. Positions 667–730 are disordered; the sequence is GHFREAPTSH…QGQSSGTKIG (64 aa). A compositionally biased stretch (polar residues) spans 721–730; that stretch reads QGQSSGTKIG.

Belongs to the PLPL family.

Its subcellular location is the membrane. Functionally, probable lipid hydrolase. This chain is Patatin-like phospholipase domain-containing protein CIMG_04897, found in Coccidioides immitis (strain RS) (Valley fever fungus).